Here is an 80-residue protein sequence, read N- to C-terminus: OMEGA-myrmeciitoxin(02)-Mg1a (80 aa).

The first 30 residues, 1–30 (MKNNYISTCIVYLMAALLLISVISIKECTA), serve as a signal peptide directing secretion. The 41-residue stretch at 35–75 (YGDPCSDDLKDYCIHGDCFFLKELNQPACRCYTGYYGSRCE) folds into the EGF-like domain. Disulfide bonds link Cys-39-Cys-52, Cys-47-Cys-63, and Cys-65-Cys-74.

It belongs to the EGF domain peptide family. In terms of tissue distribution, expressed by the venom gland.

Its subcellular location is the secreted. In terms of biological role, ant peptide with probable defensive activity which acts as a potent agonist of the mammalian epidermal growth factor receptor (EGFR) (EC(50)=6.3 nM). Mimics, both structurally and functionally, vertebrate epidermal growth factor (EGF) peptide hormones. In vivo, intraplantar injection in mice causes long-lasting (several days) hypersensitivity of the injected paw to both mechanical and thermal stimuli. Its long-lasting effect is unusual for venom toxins whose effects are usually immediate. One possible explanation is that it would reduce the duration of a nest attack, discourage future attacks, or enhance the actions of subsequent exposure to other pain-inducing venom peptides. The protein is OMEGA-myrmeciitoxin(02)-Mg1a of Myrmecia gulosa (Red bulldog ant).